Reading from the N-terminus, the 113-residue chain is Protein FMC1 homolog (113 aa).

The tract at residues 94–113 (SAGLVGLQLPHQPGGKGWEP) is disordered.

It belongs to the FMC1 family. As to quaternary structure, interacts with ATPAF2.

It is found in the mitochondrion. Plays a role in the assembly/stability of the mitochondrial membrane ATP synthase (F(1)F(0) ATP synthase or Complex V). This chain is Protein FMC1 homolog, found in Rattus norvegicus (Rat).